The chain runs to 243 residues: Orotidine 5'-phosphate decarboxylase (243 aa).

Substrate contacts are provided by residues Asp19, Lys41, 69–78 (DLKFFDIPAT), Thr124, Arg185, Gln194, Gly214, and Arg215. Lys71 functions as the Proton donor in the catalytic mechanism.

It belongs to the OMP decarboxylase family. Type 1 subfamily. In terms of assembly, homodimer.

It carries out the reaction orotidine 5'-phosphate + H(+) = UMP + CO2. It functions in the pathway pyrimidine metabolism; UMP biosynthesis via de novo pathway; UMP from orotate: step 2/2. In terms of biological role, catalyzes the decarboxylation of orotidine 5'-monophosphate (OMP) to uridine 5'-monophosphate (UMP). This chain is Orotidine 5'-phosphate decarboxylase, found in Xanthomonas axonopodis pv. citri (strain 306).